The chain runs to 283 residues: Phosphatidylserine decarboxylase proenzyme (283 aa).

Catalysis depends on charge relay system; for autoendoproteolytic cleavage activity residues D88, H145, and S248. S248 serves as the catalytic Schiff-base intermediate with substrate; via pyruvic acid; for decarboxylase activity. S248 carries the post-translational modification Pyruvic acid (Ser); by autocatalysis.

Belongs to the phosphatidylserine decarboxylase family. PSD-B subfamily. Prokaryotic type I sub-subfamily. Heterodimer of a large membrane-associated beta subunit and a small pyruvoyl-containing alpha subunit. Requires pyruvate as cofactor. In terms of processing, is synthesized initially as an inactive proenzyme. Formation of the active enzyme involves a self-maturation process in which the active site pyruvoyl group is generated from an internal serine residue via an autocatalytic post-translational modification. Two non-identical subunits are generated from the proenzyme in this reaction, and the pyruvate is formed at the N-terminus of the alpha chain, which is derived from the carboxyl end of the proenzyme. The autoendoproteolytic cleavage occurs by a canonical serine protease mechanism, in which the side chain hydroxyl group of the serine supplies its oxygen atom to form the C-terminus of the beta chain, while the remainder of the serine residue undergoes an oxidative deamination to produce ammonia and the pyruvoyl prosthetic group on the alpha chain. During this reaction, the Ser that is part of the protease active site of the proenzyme becomes the pyruvoyl prosthetic group, which constitutes an essential element of the active site of the mature decarboxylase.

It localises to the cell membrane. The enzyme catalyses a 1,2-diacyl-sn-glycero-3-phospho-L-serine + H(+) = a 1,2-diacyl-sn-glycero-3-phosphoethanolamine + CO2. It participates in phospholipid metabolism; phosphatidylethanolamine biosynthesis; phosphatidylethanolamine from CDP-diacylglycerol: step 2/2. Catalyzes the formation of phosphatidylethanolamine (PtdEtn) from phosphatidylserine (PtdSer). This is Phosphatidylserine decarboxylase proenzyme from Methylibium petroleiphilum (strain ATCC BAA-1232 / LMG 22953 / PM1).